The primary structure comprises 575 residues: FAD-dependent monooxygenase rstn6 (575 aa).

A signal peptide spans 1–17; that stretch reads MYDVIVIGAGWCGLVAA. I106 provides a ligand contact to FAD. N-linked (GlcNAc...) asparagine glycosylation is found at N239 and N295.

The protein belongs to the FAD-binding monooxygenase family. It depends on FAD as a cofactor.

It functions in the pathway antifungal biosynthesis. Its function is as follows. FAD-dependent monooxygenase; part of the gene cluster that mediates the biosynthesis of the tetrahydropyranyl antifungal agent restricticin that acts as an inhibitor of CYP51 and blocks the ergosterol biosynthesis. The highly reducing polyketide synthase rstn3, the short chain dehydrogenase rstn4, the cyclase rstn5, the FAD-dependent monooxygenase rstn6 and the enoylreductase rstn7 are required to generate the first stable intermediate desmethylrestrictinol. Rstn3 with rstn7 biosynthesize the first polyketide chain intermediate that is reduced by rstn4, followed by epoxidation by rstn6 before 6-endo cyclization via epoxide opening by rstn5 leads to desmethylrestrictinol. The methyltransferase rstn1 then catalyzes the C4 O-methylation of desmethylrestrictinol to produce restrictinol, and the nonribosomal peptide synthetase rstn8 catalyzes the C3 esterification of restrictinol with glycine that leads to restricticin. The polypeptide is FAD-dependent monooxygenase rstn6 (Aspergillus nomiae NRRL (strain ATCC 15546 / NRRL 13137 / CBS 260.88 / M93)).